A 331-amino-acid chain; its full sequence is MRPALAVGLVFAGCCSNVIFLELLARKHPGCGNIVTFAQFLFIAVEGFLFEADLGRKPPAIPIRYYAIMVTMFFTVSVVNNYALNLNIAMPLHMIFRSGSLIANMILGIIILKKRYSIFKYTSIALVSVGIFICTFMSAKQVTSQSSLSENDGFQAFVWWLLGIGALTFALLMSARMGLFQETLYKRFGKHSKEALFYNHALPLPGFVFLASDIYDHAVLFNKSELYEIPVIGVTLPIMWFYLLMNIITQYVCIRGVFILTTECASLTVTLVVTLRKFVSLIFSILYFQNPFTLWHWLGTLFVFIGTLMYTEVWNNLGTTKSEPQKDSKKN.

The next 11 membrane-spanning stretches (helical) occupy residues 4–24 (ALAV…LELL), 30–50 (GCGN…GFLF), 59–79 (PAIP…VSVV), 92–112 (LHMI…IIIL), 117–137 (SIFK…CTFM), 153–173 (GFQA…ALLM), 201–221 (ALPL…AVLF), 229–249 (IPVI…NIIT), 251–267 (YVCI…CASL), 268–288 (TVTL…ILYF), and 291–311 (PFTL…LMYT). Positions 326–331 (KDSKKN) match the Mediates endoplasmic reticulum retention motif.

It belongs to the nucleotide-sugar transporter family. SLC35B subfamily.

The protein resides in the endoplasmic reticulum membrane. It catalyses the reaction UDP-N-acetyl-alpha-D-glucosamine(in) + UDP-alpha-D-glucuronate(out) = UDP-N-acetyl-alpha-D-glucosamine(out) + UDP-alpha-D-glucuronate(in). The enzyme catalyses UDP-alpha-D-xylose(in) + UDP-alpha-D-glucuronate(out) = UDP-alpha-D-xylose(out) + UDP-alpha-D-glucuronate(in). Antiporter that transports nucleotide sugars across the endoplasmic reticulum (ER) membrane in exchange for another nucleotide sugar. May couple UDP-alpha-D-glucuronate (UDP-GlcA) or UDP-alpha-D-xylose (UDP-Xyl) efflux to UDP-alpha-D-glucuronate (UDP-GlcA) influx into the ER lumen, which in turn stimulates glucuronidation and excretion of endobiotics and xenobiotics. This is Nucleotide sugar transporter SLC35B4 (SLC35B4) from Pongo abelii (Sumatran orangutan).